The sequence spans 193 residues: Deoxycytidylate deaminase (193 aa).

Residues 1–171 (MKASTVLQIA…DILRNAGIEV (171 aa)) enclose the CMP/dCMP-type deaminase domain. Residues Cys19, Cys49, His94, Glu102, and His104 each coordinate Zn(2+). The active-site Proton donor is Glu106. Positions 132 and 135 each coordinate Zn(2+). Tyr153 lines the substrate pocket.

The protein belongs to the cytidine and deoxycytidylate deaminase family. In terms of assembly, homohexamer. Requires Zn(2+) as cofactor.

The catalysed reaction is dCMP + H2O + H(+) = dUMP + NH4(+). With respect to regulation, allosteric enzyme whose activity is greatly influenced by the end products of its metabolic pathway, dCTP and dTTP. Supplies the nucleotide substrate for thymidylate synthetase. In Escherichia coli (Bacteriophage T4), this protein is Deoxycytidylate deaminase (CD).